The sequence spans 20 residues: Non-specific lipid-transfer protein (20 aa).

This sequence belongs to the plant LTP family.

Its function is as follows. Plant non-specific lipid-transfer proteins transfer phospholipids as well as galactolipids across membranes. May play a role in wax or cutin deposition in the cell walls of expanding epidermal cells and certain secretory tissues. The protein is Non-specific lipid-transfer protein of Citrus sinensis (Sweet orange).